A 114-amino-acid chain; its full sequence is Iron-sulfur cluster insertion protein ErpA (114 aa).

Residues Cys-42, Cys-106, and Cys-108 each contribute to the iron-sulfur cluster site.

The protein belongs to the HesB/IscA family. As to quaternary structure, homodimer. Iron-sulfur cluster is required as a cofactor.

Functionally, required for insertion of 4Fe-4S clusters for at least IspG. The polypeptide is Iron-sulfur cluster insertion protein ErpA (Shigella boydii serotype 18 (strain CDC 3083-94 / BS512)).